The chain runs to 858 residues: NEDD4-binding protein 1 (858 aa).

The segment at 17–37 is disordered; that stretch reads TCTEPPGGRQSPTASRAQPDS. The segment covering 26–37 has biased composition (polar residues); it reads QSPTASRAQPDS. The region spanning 96–180 is the KH-like domain; that stretch reads KEDVYKAKEY…VQQFVALFQE (85 aa). 2 disordered regions span residues 262–321 and 388–424; these read EDKT…TWTV and QKTQ…KEKE. Basic and acidic residues predominate over residues 285-316; that stretch reads RSSESEQRDTKRQYSLERREEEQCEEREREPT. The span at 389-418 shows a compositional bias: polar residues; it reads KTQSTQGAQRTSRTPDPSPCANASSTSTSN. An RNase NYN domain is found at 598-750; the sequence is LRHIIIDGSN…LGKHGPHLDE (153 aa). Residues 774–784 are compositionally biased toward polar residues; the sequence is SVYSQAAQSTA. A disordered region spans residues 774–823; sequence SVYSQAAQSTAHPSSPSHWPHSGPPDWHLPRPSPSPPPQRSPSETTELKR. Over residues 785-799 the composition is skewed to low complexity; it reads HPSSPSHWPHSGPPD. Positions 804 to 813 are enriched in pro residues; it reads RPSPSPPPQR. A coCUN region spans residues 813–858; sequence RSPSETTELKRKLYDIFPDQKQRIDRILSDNPYMRDLNALSGLLLG.

Belongs to the N4BP1 family.

The protein resides in the nucleus. It localises to the nucleolus. The protein localises to the PML body. Its function is as follows. Potent suppressor of cytokine production that acts as a regulator of innate immune signaling and inflammation. Acts as a key negative regulator of select cytokine and chemokine responses elicited by TRIF-independent Toll-like receptors (TLRs), thereby limiting inflammatory cytokine responses to minor insults. Has ribonuclease activity. This Danio rerio (Zebrafish) protein is NEDD4-binding protein 1.